The sequence spans 859 residues: Rod cGMP-specific 3',5'-cyclic phosphodiesterase subunit alpha (859 aa).

Gly2 is modified (N-acetylglycine). GAF domains are found at residues 73-222 and 254-431; these read QAEK…NLIM and DIER…GWSV. The PDEase domain maps to 483–816; it reads EEEELAEILQ…KEWKALADEY (334 aa). Residue His559 is the Proton donor of the active site. 4 residues coordinate a divalent metal cation: His563, His599, Asp600, and Asp720. Positions 823 to 859 are disordered; that stretch reads LEEEKQKQQAAKQAASGNQPGGNPLQGAPASKSCCIQ. At Cys856 the chain carries Cysteine methyl ester. Cys856 carries S-farnesyl cysteine lipidation. A propeptide spans 857 to 859 (removed in mature form); that stretch reads CIQ.

Belongs to the cyclic nucleotide phosphodiesterase family. As to quaternary structure, oligomer composed of two catalytic chains (alpha and beta), an inhibitory chain (gamma) and the delta chain. Requires a divalent metal cation as cofactor.

The protein resides in the cell membrane. The protein localises to the cell projection. It is found in the cilium. It localises to the photoreceptor outer segment. The catalysed reaction is 3',5'-cyclic GMP + H2O = GMP + H(+). Functionally, rod-specific cGMP phosphodiesterase that catalyzes the hydrolysis of 3',5'-cyclic GMP. This protein participates in processes of transmission and amplification of the visual signal. The protein is Rod cGMP-specific 3',5'-cyclic phosphodiesterase subunit alpha of Mus musculus (Mouse).